The following is a 449-amino-acid chain: Protein cortex (449 aa).

6 WD repeats span residues Thr-108–Gly-148, Tyr-149–Ser-188, Asn-198–Arg-237, Asp-283–Thr-327, Thr-345–Gly-382, and Ser-386–Lys-425. The D-box signature appears at Ser-386–Ser-397.

It belongs to the WD repeat CORT family.

Its subcellular location is the cytoplasm. Functionally, controls wing pigmentation patterning by regulating scale cell development, thereby playing a key role in mimicry and crypsis. Probably acts as an activator of the anaphase promoting complex/cyclosome (APC/C) that promotes the ubiquitin ligase activity and substrate specificity of the APC/C. The sequence is that of Protein cortex from Heliconius erato (Crimson patched longwing butterfly).